Consider the following 267-residue polypeptide: Putative transcription factor Ovo-like 1 (267 aa).

C2H2-type zinc fingers lie at residues 118 to 140, 146 to 168, 174 to 197, and 213 to 236; these read FTCH…MKCH, HLCT…VRTH, YKCS…KKIH, and YVCE…KERH.

Expressed in skin, testis, kidney and weakly in lung. Not detected in heart, brain, spleen, liver and skeletal muscle.

It localises to the nucleus. In terms of biological role, putative transcription factor. Involved in hair formation and spermatogenesis. May function in the differentiation and/or maintenance of the urogenital system. In Mus musculus (Mouse), this protein is Putative transcription factor Ovo-like 1 (Ovol1).